A 182-amino-acid chain; its full sequence is 3-hydroxyanthranilate 3,4-dioxygenase (182 aa).

O2 is bound at residue R46. Positions 50, 56, and 96 each coordinate Fe cation. E56 serves as a coordination point for substrate. Substrate contacts are provided by R100 and E111. Residues C126, C129, C163, and C166 each contribute to the Fe cation site.

Belongs to the 3-HAO family. In terms of assembly, homodimer. Fe(2+) is required as a cofactor.

The enzyme catalyses 3-hydroxyanthranilate + O2 = (2Z,4Z)-2-amino-3-carboxymuconate 6-semialdehyde. Its pathway is cofactor biosynthesis; NAD(+) biosynthesis; quinolinate from L-kynurenine: step 3/3. In terms of biological role, catalyzes the oxidative ring opening of 3-hydroxyanthranilate to 2-amino-3-carboxymuconate semialdehyde, which spontaneously cyclizes to quinolinate. The chain is 3-hydroxyanthranilate 3,4-dioxygenase from Brucella anthropi (strain ATCC 49188 / DSM 6882 / CCUG 24695 / JCM 21032 / LMG 3331 / NBRC 15819 / NCTC 12168 / Alc 37) (Ochrobactrum anthropi).